We begin with the raw amino-acid sequence, 299 residues long: Nucleophosmin (299 aa).

Positions 125–134 are enriched in acidic residues; sequence ESSDDEDEEH. The interval 125–247 is disordered; the sequence is ESSDDEDEEH…TPKTPLSSEE (123 aa). The short motif at 153–158 is the Nuclear localization signal element; that stretch reads PRKKTR. Acidic residues predominate over residues 160-187; sequence EEEEEDSDEDDDDDEDDDDEDDDEEEEE. The segment covering 188–197 has biased composition (basic and acidic residues); that stretch reads TPVKKTDSTK. Positions 189-195 match the Nuclear localization signal motif; it reads PVKKTDS. 4 repeats span residues 218–220, 221–223, 237–239, and 240–242; these read KTP. Positions 218–242 are 4 X 3 AA repeats of K-T-P; sequence KTPKTPEQKGKQDTKPQTPKTPKTP. A compositionally biased stretch (basic and acidic residues) spans 221–231; it reads KTPEQKGKQDT. Over residues 232 to 242 the composition is skewed to low complexity; that stretch reads KPQTPKTPKTP.

It belongs to the nucleoplasmin family. Decamer formed by two pentameric rings associated in a head-to-head fashion. In terms of processing, phosphorylated.

It localises to the cytoplasm. It is found in the nucleus. The protein resides in the nucleoplasm. The protein localises to the nucleolus. Acts as a chaperonin for the core histones H3, H2B and H4. Associated with nucleolar ribonucleoprotein structures and bind single-stranded nucleic acids. It may function in the assembly and/or transport of ribosome. May stimulate endonuclease activity on apurinic/apyrimidinic (AP) double-stranded DNA. May inhibit endonuclease activity on AP single-stranded RNA. The sequence is that of Nucleophosmin (npm1) from Xenopus laevis (African clawed frog).